A 197-amino-acid chain; its full sequence is Adrenodoxin-like protein 1, mitochondrial (197 aa).

Residues 1–35 constitute a mitochondrion transit peptide; the sequence is MIGHRISRLGSTIVKQLAREGYLATYGTKNLHRSY. Residues 79-184 form the 2Fe-2S ferredoxin-type domain; it reads EKITIIFVDK…GVRLAIPSAT (106 aa). Residues Cys-118, Cys-124, Cys-127, and Cys-165 each contribute to the [2Fe-2S] cluster site.

The protein belongs to the adrenodoxin/putidaredoxin family. Requires [2Fe-2S] cluster as cofactor.

The protein resides in the mitochondrion matrix. Its function is as follows. Associates in vitro with the adrenodoxin reductase MFDR to form an efficient low potential electron transfer chain that is able to reduce cytochrome C. Functions as accessory mitochondrial protein involved with BIO2 in the plant biotin synthase reaction. The polypeptide is Adrenodoxin-like protein 1, mitochondrial (Arabidopsis thaliana (Mouse-ear cress)).